We begin with the raw amino-acid sequence, 327 residues long: MLRLIVNYPLIPKISHRVCSNSSSKLGSYYDSSSIIKYGGISDVVGKKQELFLSVSVKAVEDKGNNGGGSMSFSGQSWDPSSEIEVPSDQRPVNEYSSLKEGMLYSWGELGPSEFFIRLGGLWLVTFTVLGVPVAAASFNPSREPLRFILAAGTGTLFLVSLIVLRIYLGWSYVGDRLLSAVIPYEESGWYDGQMWVKPPEVLARDRLLGSYKVKPVIKMLKQTLIGTGALLVSAFVLFVFATPVEDFFKTTLGSTENQPEVSISRTSNKFNIRKEQLLRLPVDVVTDDDLAAAAAEAADGRPVYCRDRYYRALAGGQYCKWEDLVK.

The N-terminal 59 residues, 1–59 (MLRLIVNYPLIPKISHRVCSNSSSKLGSYYDSSSIIKYGGISDVVGKKQELFLSVSVKA), are a transit peptide targeting the chloroplast. The tract at residues 66 to 88 (NGGGSMSFSGQSWDPSSEIEVPS) is disordered. 3 helical membrane passes run 119 to 139 (LGGL…AASF), 148 to 168 (FILA…LRIY), and 225 to 245 (LIGT…ATPV).

As to expression, mostly expressed in seeds, leaves and flowers, and, to a lower extent, in roots.

The protein localises to the membrane. The protein resides in the plastid. It is found in the chloroplast. Functionally, required for growth in low iron conditions. The polypeptide is Protein CONSERVED IN THE GREEN LINEAGE AND DIATOMS 27, chloroplastic (Arabidopsis thaliana (Mouse-ear cress)).